A 295-amino-acid chain; its full sequence is Ribosomal RNA small subunit methyltransferase A (295 aa).

6 residues coordinate S-adenosyl-L-methionine: Asn-31, Leu-33, Gly-58, Glu-79, Asp-104, and Asn-129.

The protein belongs to the class I-like SAM-binding methyltransferase superfamily. rRNA adenine N(6)-methyltransferase family. RsmA subfamily.

Its subcellular location is the cytoplasm. The catalysed reaction is adenosine(1518)/adenosine(1519) in 16S rRNA + 4 S-adenosyl-L-methionine = N(6)-dimethyladenosine(1518)/N(6)-dimethyladenosine(1519) in 16S rRNA + 4 S-adenosyl-L-homocysteine + 4 H(+). Specifically dimethylates two adjacent adenosines (A1518 and A1519) in the loop of a conserved hairpin near the 3'-end of 16S rRNA in the 30S particle. May play a critical role in biogenesis of 30S subunits. The sequence is that of Ribosomal RNA small subunit methyltransferase A from Leuconostoc mesenteroides subsp. mesenteroides (strain ATCC 8293 / DSM 20343 / BCRC 11652 / CCM 1803 / JCM 6124 / NCDO 523 / NBRC 100496 / NCIMB 8023 / NCTC 12954 / NRRL B-1118 / 37Y).